Consider the following 652-residue polypeptide: Proline-rich receptor-like protein kinase PERK1 (652 aa).

A disordered region spans residues 1 to 137 (MSTAPSPGTT…PPSDSSDGLS (137 aa)). Residues 1–139 (MSTAPSPGTT…SDSSDGLSTG (139 aa)) lie on the Extracellular side of the membrane. Residues 8-19 (GTTPSPSPPSPP) are compositionally biased toward pro residues. Asn21 and Asn50 each carry an N-linked (GlcNAc...) asparagine glycan. Residues 26–112 (TPPPAASSPP…PSPNQGPPNT (87 aa)) are compositionally biased toward pro residues. The span at 113–137 (PSGSTPRTPSNTKPSPPSDSSDGLS) shows a compositional bias: low complexity. The chain crosses the membrane as a helical span at residues 140 to 160 (VVVGIAIGGVAILVILTLICL). Over 161 to 652 (LCKKKRRRRH…TGQGYSGPSL (492 aa)) the chain is Cytoplasmic. Residues 169–251 (RHDDEAAYYV…GGSDYSDLPV (83 aa)) are disordered. Residues 203 to 213 (NASRPSDNHVV) show a composition bias toward polar residues. Over residues 216–236 (LPPPKPPSPPRKPPPPPPPPA) the composition is skewed to pro residues. Phosphothreonine is present on Thr269. In terms of domain architecture, Protein kinase spans 280-559 (FSEANLLGQG…VRALEGNVSL (280 aa)). ATP-binding positions include 286–294 (LGQGGFGYV) and Lys308. Tyr353 carries the phosphotyrosine modification. The active-site Proton acceptor is Asp404. 2 positions are modified to phosphoserine: Ser408 and Ser437. Residues Thr438 and Thr443 each carry the phosphothreonine modification. A Phosphotyrosine modification is found at Tyr451. Residues 605–616 (YGTTGEYSNPTS) show a composition bias toward polar residues. A disordered region spans residues 605-652 (YGTTGEYSNPTSDYGLYPSGSSSEGQATREMEMGKIKKTGQGYSGPSL).

It belongs to the protein kinase superfamily. Ser/Thr protein kinase family. In terms of tissue distribution, mostly expressed in inflorescence bolt, flower buds and siliques, and, to a lower extent, in roots, seedlings and leaves.

Its subcellular location is the cell membrane. It carries out the reaction L-seryl-[protein] + ATP = O-phospho-L-seryl-[protein] + ADP + H(+). It catalyses the reaction L-threonyl-[protein] + ATP = O-phospho-L-threonyl-[protein] + ADP + H(+). In Arabidopsis thaliana (Mouse-ear cress), this protein is Proline-rich receptor-like protein kinase PERK1 (PERK1).